The following is a 347-amino-acid chain: Phenylalanine--tRNA ligase alpha subunit (347 aa).

Glutamate 261 provides a ligand contact to Mg(2+).

The protein belongs to the class-II aminoacyl-tRNA synthetase family. Phe-tRNA synthetase alpha subunit type 1 subfamily. In terms of assembly, tetramer of two alpha and two beta subunits. Requires Mg(2+) as cofactor.

It is found in the cytoplasm. It catalyses the reaction tRNA(Phe) + L-phenylalanine + ATP = L-phenylalanyl-tRNA(Phe) + AMP + diphosphate + H(+). The protein is Phenylalanine--tRNA ligase alpha subunit of Streptococcus equi subsp. equi (strain 4047).